Reading from the N-terminus, the 345-residue chain is S-adenosylmethionine:tRNA ribosyltransferase-isomerase (345 aa).

The protein belongs to the QueA family. In terms of assembly, monomer.

It localises to the cytoplasm. It carries out the reaction 7-aminomethyl-7-carbaguanosine(34) in tRNA + S-adenosyl-L-methionine = epoxyqueuosine(34) in tRNA + adenine + L-methionine + 2 H(+). It functions in the pathway tRNA modification; tRNA-queuosine biosynthesis. Functionally, transfers and isomerizes the ribose moiety from AdoMet to the 7-aminomethyl group of 7-deazaguanine (preQ1-tRNA) to give epoxyqueuosine (oQ-tRNA). In Anaeromyxobacter dehalogenans (strain 2CP-1 / ATCC BAA-258), this protein is S-adenosylmethionine:tRNA ribosyltransferase-isomerase.